The primary structure comprises 563 residues: CTP synthase (563 aa).

An amidoligase domain region spans residues 1–278 (MAKATAKNSA…DLRVLEQLHL (278 aa)). CTP is bound at residue Ser-24. Ser-24 is a binding site for UTP. 25–30 (SLGKGI) serves as a coordination point for ATP. Tyr-65 lines the L-glutamine pocket. Residue Asp-82 participates in ATP binding. Mg(2+)-binding residues include Asp-82 and Glu-151. CTP is bound by residues 158-160 (DIE), 198-203 (KTKPSQ), and Lys-234. Residues 198–203 (KTKPSQ) and Lys-234 contribute to the UTP site. 250 to 252 (KDV) provides a ligand contact to ATP. Positions 303–545 (TIALVGKYIA…VKAALEQKKA (243 aa)) constitute a Glutamine amidotransferase type-1 domain. Gly-363 serves as a coordination point for L-glutamine. Cys-390 serves as the catalytic Nucleophile; for glutamine hydrolysis. L-glutamine is bound by residues 391–394 (LGMQ), Glu-414, and Arg-471. Active-site residues include His-518 and Glu-520. The segment at 542 to 563 (QKKANGKKPTAPSEKTKKTKTK) is disordered.

This sequence belongs to the CTP synthase family. In terms of assembly, homotetramer.

The catalysed reaction is UTP + L-glutamine + ATP + H2O = CTP + L-glutamate + ADP + phosphate + 2 H(+). It catalyses the reaction L-glutamine + H2O = L-glutamate + NH4(+). The enzyme catalyses UTP + NH4(+) + ATP = CTP + ADP + phosphate + 2 H(+). It functions in the pathway pyrimidine metabolism; CTP biosynthesis via de novo pathway; CTP from UDP: step 2/2. With respect to regulation, allosterically activated by GTP, when glutamine is the substrate; GTP has no effect on the reaction when ammonia is the substrate. The allosteric effector GTP functions by stabilizing the protein conformation that binds the tetrahedral intermediate(s) formed during glutamine hydrolysis. Inhibited by the product CTP, via allosteric rather than competitive inhibition. Catalyzes the ATP-dependent amination of UTP to CTP with either L-glutamine or ammonia as the source of nitrogen. Regulates intracellular CTP levels through interactions with the four ribonucleotide triphosphates. This chain is CTP synthase, found in Fibrobacter succinogenes (strain ATCC 19169 / S85).